Reading from the N-terminus, the 1448-residue chain is Murinoglobulin-2 (1448 aa).

An N-terminal signal peptide occupies residues 1 to 24 (MWKNREAQLCLFSVLLAFLPSASL). 3 disulfides stabilise this stretch: Cys48/Cys86, Cys245/Cys277, and Cys263/Cys289. N-linked (GlcNAc...) asparagine glycosylation occurs at Asn55. N-linked (GlcNAc...) asparagine glycans are attached at residues Asn295, Asn315, Asn387, and Asn502. Intrachain disulfides connect Cys462–Cys556, Cys588–Cys748, and Cys636–Cys681. Residues 678–709 (PTYCYDLPKEPPRKDPPRKDPEPKDTVVETIR) are bait region. Residues Asn751 and Asn846 are each glycosylated (N-linked (GlcNAc...) asparagine). 4 disulfide bridges follow: Cys824–Cys860, Cys898–Cys1295, Cys1056–Cys1101, and Cys1326–Cys1441. The isoglutamyl cysteine thioester (Cys-Gln) cross-link spans 949–952 (CGEQ). Asn968 carries N-linked (GlcNAc...) asparagine glycosylation. N-linked (GlcNAc...) asparagine glycosylation is found at Asn1114, Asn1285, and Asn1398.

It belongs to the protease inhibitor I39 (alpha-2-macroglobulin) family. Monomer.

The protein resides in the secreted. Functionally, a proteinase activates the inhibitor by specific proteolysis in the bait region, which, by an unknown mechanism leads to reaction at the cysteinyl-glutamyl internal thiol ester site and to a conformational change, whereby the proteinase is trapped and/or covalently bound to the inhibitor. While in the tetrameric proteinase inhibitors steric inhibition is sufficiently strong, monomeric forms need a covalent linkage between the activated glutamyl residue of the original thiol ester and a terminal amino group of a lysine or another nucleophilic group on the proteinase, for inhibition to be effective. The chain is Murinoglobulin-2 from Rattus norvegicus (Rat).